The primary structure comprises 254 residues: Phosphomannomutase (254 aa).

Residue D16 is the Nucleophile of the active site. Mg(2+) contacts are provided by D16 and D18. D18 serves as the catalytic Proton donor/acceptor. Residues R25, R129, R140, R147, S185, and D187 each coordinate alpha-D-mannose 1-phosphate. 4 residues coordinate Mg(2+): D216, Y228, D230, and T233.

This sequence belongs to the eukaryotic PMM family. Homodimer.

The protein resides in the cytoplasm. It carries out the reaction alpha-D-mannose 1-phosphate = D-mannose 6-phosphate. The protein operates within nucleotide-sugar biosynthesis; GDP-alpha-D-mannose biosynthesis; alpha-D-mannose 1-phosphate from D-fructose 6-phosphate: step 2/2. In terms of biological role, involved in the synthesis of the GDP-mannose and dolichol-phosphate-mannose required for a number of critical mannosyl transfer reactions. Required for maintaining N-linked glycoprotein glycosylation at the neuromuscular junction (NMJ) synaptomatrix, and thus acts in multiple pathways that prevent NMJ structural overgrowth, restrict synaptic bouton differentiation, and limit NMJ neurotransmission strength, in order to maintain viability, coordinate movement, and in adults ensure correct wing positioning. Acts in the NMJ trans-synaptic Wg pathway via glycosylation of synaptic Mmp2 which enables dlp/wg signaling during development. The chain is Phosphomannomutase from Drosophila melanogaster (Fruit fly).